The primary structure comprises 473 residues: Bifunctional protein GlmU (473 aa).

Residues 1 to 240 are pyrophosphorylase; sequence MAIHPLDVVI…AAQVAGVNSP (240 aa). UDP-N-acetyl-alpha-D-glucosamine contacts are provided by residues K25, Q83, 88 to 89, 110 to 112, G147, E165, and N238; these read GT and SGD. D112 serves as a coordination point for Mg(2+). N238 lines the Mg(2+) pocket. Residues 241–261 are linker; the sequence is VQLAELERVYQQRLATTLMEQ. Positions 262–473 are N-acetyltransferase; sequence GVRLADPARL…WARPVKKPGV (212 aa). Residues R348 and K366 each coordinate UDP-N-acetyl-alpha-D-glucosamine. H378 acts as the Proton acceptor in catalysis. UDP-N-acetyl-alpha-D-glucosamine is bound by residues Y381 and N392. Acetyl-CoA contacts are provided by residues A395, 401-402, S420, G438, and R455; that span reads NY.

The protein in the N-terminal section; belongs to the N-acetylglucosamine-1-phosphate uridyltransferase family. This sequence in the C-terminal section; belongs to the transferase hexapeptide repeat family. As to quaternary structure, homotrimer. Mg(2+) serves as cofactor.

The protein resides in the cytoplasm. The enzyme catalyses alpha-D-glucosamine 1-phosphate + acetyl-CoA = N-acetyl-alpha-D-glucosamine 1-phosphate + CoA + H(+). It carries out the reaction N-acetyl-alpha-D-glucosamine 1-phosphate + UTP + H(+) = UDP-N-acetyl-alpha-D-glucosamine + diphosphate. The protein operates within nucleotide-sugar biosynthesis; UDP-N-acetyl-alpha-D-glucosamine biosynthesis; N-acetyl-alpha-D-glucosamine 1-phosphate from alpha-D-glucosamine 6-phosphate (route II): step 2/2. Its pathway is nucleotide-sugar biosynthesis; UDP-N-acetyl-alpha-D-glucosamine biosynthesis; UDP-N-acetyl-alpha-D-glucosamine from N-acetyl-alpha-D-glucosamine 1-phosphate: step 1/1. It functions in the pathway bacterial outer membrane biogenesis; LPS lipid A biosynthesis. Its function is as follows. Catalyzes the last two sequential reactions in the de novo biosynthetic pathway for UDP-N-acetylglucosamine (UDP-GlcNAc). The C-terminal domain catalyzes the transfer of acetyl group from acetyl coenzyme A to glucosamine-1-phosphate (GlcN-1-P) to produce N-acetylglucosamine-1-phosphate (GlcNAc-1-P), which is converted into UDP-GlcNAc by the transfer of uridine 5-monophosphate (from uridine 5-triphosphate), a reaction catalyzed by the N-terminal domain. The protein is Bifunctional protein GlmU of Polaromonas naphthalenivorans (strain CJ2).